The following is a 475-amino-acid chain: E3 ubiquitin-protein ligase TRIM62 (475 aa).

The RING-type zinc finger occupies 11–54 (CSICLSIYQDPVSLGCEHYFCRRCITEHWVRQEAQGARDCPECR). The segment at 88 to 128 (RAARPCQAHDKVKLFCLTDRALLCFFCDEPALHEQHQVTGI) adopts a B box-type zinc-finger fold. Residues C93, H96, C114, and H120 each contribute to the Zn(2+) site. Residues 121 to 241 (EQHQVTGIDD…LQERLAETDR (121 aa)) adopt a coiled-coil conformation. A B30.2/SPRY domain is found at 277–475 (PLQYTIWKSL…QPLRINTVRI (199 aa)).

The protein belongs to the TRIM/RBCC family. In terms of assembly, interacts with the ubiquitin-conjugating enzyme, UBE2D2. In terms of processing, polyubiquitinated, autoubiquitinated in the presence of UBE2D2.

Its subcellular location is the cytoplasm. It carries out the reaction S-ubiquitinyl-[E2 ubiquitin-conjugating enzyme]-L-cysteine + [acceptor protein]-L-lysine = [E2 ubiquitin-conjugating enzyme]-L-cysteine + N(6)-ubiquitinyl-[acceptor protein]-L-lysine.. The protein operates within protein modification; protein ubiquitination. Functionally, E3 ubiquitin ligase that plays a role in antifungal immunity by mediating 'Lys-27'-linked ubiquitination of CARD9 downstream of C-type lectin receptors; leading to CARD9 activation, followed by activation of NF-kappa-B and MAP kinase p38 pathways. E3 ubiquitin ligase activity is dependent on E2 ubiquitin-conjugating enzyme UBE2D2. This chain is E3 ubiquitin-protein ligase TRIM62, found in Mus musculus (Mouse).